The chain runs to 160 residues: MRIWIDADACPKAAKELVCKFALKRKLEVWMVAGQPQVKPPFACVRLVVVESGMDAADDYLVEQAEPGDLAICSDVPLADRLIKKQVAALDPRGREFDARNMGDKLAMRNLMADLRDQGQMGGGQAPYAERDRQAFANALDRLLTRLQREADLRASQPHR.

This sequence belongs to the UPF0178 family.

The protein is UPF0178 protein PA14_69280 of Pseudomonas aeruginosa (strain UCBPP-PA14).